Here is a 99-residue protein sequence, read N- to C-terminus: Small ribosomal subunit protein bS20 (99 aa).

It belongs to the bacterial ribosomal protein bS20 family.

Binds directly to 16S ribosomal RNA. The protein is Small ribosomal subunit protein bS20 of Cyanothece sp. (strain PCC 7425 / ATCC 29141).